The sequence spans 361 residues: Holliday junction branch migration complex subunit RuvB (361 aa).

The segment at 1 to 183 (MAEPSLVAAG…FGFTGHLEFY (183 aa)) is large ATPase domain (RuvB-L). Residues L22, R23, G64, K67, T68, T69, 130-132 (EDF), R173, Y183, and R220 each bind ATP. Residue T68 coordinates Mg(2+). The small ATPAse domain (RuvB-S) stretch occupies residues 184 to 254 (SVPELELVLR…SASAALDMYE (71 aa)). Residues 257 to 361 (KKGLDRLDRS…VTGEWAPESQ (105 aa)) are head domain (RuvB-H). DNA is bound by residues R312 and R317.

Belongs to the RuvB family. Homohexamer. Forms an RuvA(8)-RuvB(12)-Holliday junction (HJ) complex. HJ DNA is sandwiched between 2 RuvA tetramers; dsDNA enters through RuvA and exits via RuvB. An RuvB hexamer assembles on each DNA strand where it exits the tetramer. Each RuvB hexamer is contacted by two RuvA subunits (via domain III) on 2 adjacent RuvB subunits; this complex drives branch migration. In the full resolvosome a probable DNA-RuvA(4)-RuvB(12)-RuvC(2) complex forms which resolves the HJ.

It is found in the cytoplasm. It catalyses the reaction ATP + H2O = ADP + phosphate + H(+). The RuvA-RuvB-RuvC complex processes Holliday junction (HJ) DNA during genetic recombination and DNA repair, while the RuvA-RuvB complex plays an important role in the rescue of blocked DNA replication forks via replication fork reversal (RFR). RuvA specifically binds to HJ cruciform DNA, conferring on it an open structure. The RuvB hexamer acts as an ATP-dependent pump, pulling dsDNA into and through the RuvAB complex. RuvB forms 2 homohexamers on either side of HJ DNA bound by 1 or 2 RuvA tetramers; 4 subunits per hexamer contact DNA at a time. Coordinated motions by a converter formed by DNA-disengaged RuvB subunits stimulates ATP hydrolysis and nucleotide exchange. Immobilization of the converter enables RuvB to convert the ATP-contained energy into a lever motion, pulling 2 nucleotides of DNA out of the RuvA tetramer per ATP hydrolyzed, thus driving DNA branch migration. The RuvB motors rotate together with the DNA substrate, which together with the progressing nucleotide cycle form the mechanistic basis for DNA recombination by continuous HJ branch migration. Branch migration allows RuvC to scan DNA until it finds its consensus sequence, where it cleaves and resolves cruciform DNA. This chain is Holliday junction branch migration complex subunit RuvB, found in Pseudarthrobacter chlorophenolicus (strain ATCC 700700 / DSM 12829 / CIP 107037 / JCM 12360 / KCTC 9906 / NCIMB 13794 / A6) (Arthrobacter chlorophenolicus).